Reading from the N-terminus, the 543-residue chain is Germacrene A synthase (543 aa).

Asp296, Asp300, Asp439, and Glu447 together coordinate Mg(2+). A DDXXD motif motif is present at residues Asp296–Asp300.

Belongs to the terpene synthase family. Tpsa subfamily. Requires Mg(2+) as cofactor. Mn(2+) serves as cofactor. Barely detectable in leaves.

It localises to the plastid. Its subcellular location is the chloroplast. The enzyme catalyses (2E,6E)-farnesyl diphosphate = germacrene A + diphosphate. It catalyses the reaction (2E,6E)-farnesyl diphosphate = (1S,2S,4R)-beta-elemene + diphosphate. It participates in secondary metabolite biosynthesis; terpenoid biosynthesis. Its function is as follows. Sesquiterpene synthase involved in the biosynthesis of volatile compounds widely used in aromatherapy and folk medicine, and present in culinary herbs. Mediates the conversion of (2E,6E)-farnesyl diphosphate (FPP) into germacrene A and beta-elemene. Not able to use (2E)-geranyl diphosphate (GPP) as substrate. The sequence is that of Germacrene A synthase from Lavandula viridis (Green lavender).